Reading from the N-terminus, the 71-residue chain is Long neurotoxin 1 (71 aa).

Disulfide bonds link Cys3–Cys20, Cys14–Cys41, Cys26–Cys30, Cys45–Cys56, and Cys57–Cys62.

It belongs to the three-finger toxin family. Long-chain subfamily. Type II alpha-neurotoxin sub-subfamily. In terms of tissue distribution, expressed by the venom gland.

The protein resides in the secreted. Functionally, binds with high affinity to muscular (alpha-1/CHRNA1) and neuronal (alpha-7/CHRNA7) nicotinic acetylcholine receptor (nAChR) and inhibits acetylcholine from binding to the receptor, thereby impairing neuromuscular and neuronal transmission. The chain is Long neurotoxin 1 from Naja naja (Indian cobra).